Consider the following 339-residue polypeptide: Uroporphyrinogen decarboxylase (339 aa).

Substrate contacts are provided by residues 21-25 (RQAGR), D71, Y147, S202, and H315.

Belongs to the uroporphyrinogen decarboxylase family. As to quaternary structure, homodimer.

Its subcellular location is the cytoplasm. The catalysed reaction is uroporphyrinogen III + 4 H(+) = coproporphyrinogen III + 4 CO2. Its pathway is porphyrin-containing compound metabolism; protoporphyrin-IX biosynthesis; coproporphyrinogen-III from 5-aminolevulinate: step 4/4. Functionally, catalyzes the decarboxylation of four acetate groups of uroporphyrinogen-III to yield coproporphyrinogen-III. The polypeptide is Uroporphyrinogen decarboxylase (Helicobacter pylori (strain HPAG1)).